Reading from the N-terminus, the 121-residue chain is Large ribosomal subunit protein bL12 (121 aa).

Belongs to the bacterial ribosomal protein bL12 family. In terms of assembly, homodimer. Part of the ribosomal stalk of the 50S ribosomal subunit. Forms a multimeric L10(L12)X complex, where L10 forms an elongated spine to which 2 to 4 L12 dimers bind in a sequential fashion. Binds GTP-bound translation factors.

Forms part of the ribosomal stalk which helps the ribosome interact with GTP-bound translation factors. Is thus essential for accurate translation. This chain is Large ribosomal subunit protein bL12, found in Streptococcus pyogenes serotype M3 (strain ATCC BAA-595 / MGAS315).